A 181-amino-acid chain; its full sequence is ATP-dependent protease subunit HslV (181 aa).

Thr7 is a catalytic residue. Ala166, Cys169, and Thr172 together coordinate Na(+).

This sequence belongs to the peptidase T1B family. HslV subfamily. A double ring-shaped homohexamer of HslV is capped on each side by a ring-shaped HslU homohexamer. The assembly of the HslU/HslV complex is dependent on binding of ATP.

The protein localises to the cytoplasm. It carries out the reaction ATP-dependent cleavage of peptide bonds with broad specificity.. Its activity is regulated as follows. Allosterically activated by HslU binding. Protease subunit of a proteasome-like degradation complex believed to be a general protein degrading machinery. In Anaeromyxobacter dehalogenans (strain 2CP-C), this protein is ATP-dependent protease subunit HslV.